We begin with the raw amino-acid sequence, 95 residues long: MAIDAATVRKVARLARIAEPEEKLEPLAKELSGILNWIEQLNEVDTDGVEPMTTSVETTLPMRDDVVTEGGDPAKVLANAPKAAKNFFVVPKVVE.

The protein belongs to the GatC family. As to quaternary structure, heterotrimer of A, B and C subunits.

The catalysed reaction is L-glutamyl-tRNA(Gln) + L-glutamine + ATP + H2O = L-glutaminyl-tRNA(Gln) + L-glutamate + ADP + phosphate + H(+). The enzyme catalyses L-aspartyl-tRNA(Asn) + L-glutamine + ATP + H2O = L-asparaginyl-tRNA(Asn) + L-glutamate + ADP + phosphate + 2 H(+). Allows the formation of correctly charged Asn-tRNA(Asn) or Gln-tRNA(Gln) through the transamidation of misacylated Asp-tRNA(Asn) or Glu-tRNA(Gln) in organisms which lack either or both of asparaginyl-tRNA or glutaminyl-tRNA synthetases. The reaction takes place in the presence of glutamine and ATP through an activated phospho-Asp-tRNA(Asn) or phospho-Glu-tRNA(Gln). The sequence is that of Aspartyl/glutamyl-tRNA(Asn/Gln) amidotransferase subunit C from Phenylobacterium zucineum (strain HLK1).